Here is a 1820-residue protein sequence, read N- to C-terminus: Kinesin-like protein KIF20B (1820 aa).

The Kinesin motor domain maps to 58–479 (YLQVCLRIRP…LKFSAIAQKV (422 aa)). 152 to 159 (GLTNSGKT) is a binding site for ATP. Position 488 is a phosphoserine (Ser-488). Coiled-coil stretches lie at residues 523 to 603 (ENSL…KIRE) and 674 to 793 (GFED…MENT). Thr-560 carries the phosphothreonine modification. The interval 829–866 (SERKRVNENELQQDEPPAKKGSIHVSSAITEDQKKSEE) is disordered. At Ser-997 the chain carries Phosphoserine. Residues 1050-1107 (ENSFHSSIEAIWEECKEIVKASSKKSHQIEELEQQIEKLQAEVKGYKDENNRLKEKEH) are necessary and sufficient for interaction with SHTN1. Basic and acidic residues predominate over residues 1247–1264 (EEEEETNRQETEKLKEEL). The tract at residues 1247–1275 (EEEEETNRQETEKLKEELSASSARTQNLK) is disordered. Residues 1265 to 1274 (SASSARTQNL) show a composition bias toward polar residues. Positions 1560–1820 (IETQIMDIKP…KRRLRTKTAK (261 aa)) are interaction with PIN1. Ser-1588 carries the phosphoserine modification. Thr-1644 bears the Phosphothreonine; by CDK1 mark. Ser-1658, Ser-1715, and Ser-1740 each carry phosphoserine. The segment covering 1760–1772 (LSNVEASKENVSQ) has biased composition (polar residues). Residues 1760 to 1781 (LSNVEASKENVSQPKRAKRKLY) are disordered.

The protein belongs to the TRAFAC class myosin-kinesin ATPase superfamily. Kinesin family. As to quaternary structure, oligomerizes (via kinesin motor domain). Associates with microtubules. Interacts (via C-terminal globular tail region) with PIN1 (via WW domain). Interacts with PRC1. Interacts with SHTN1 (via N-terminus); the interaction is direct and promotes the association of SHTN1 to microtubules in primary neurons. Phosphorylated during mitosis by CDK1. Brain, ovary, kidney and testis (at protein level). Overexpressed in bladder cancer cells (at protein level). Expressed in testis. Overexpressed in bladder cancer cells.

The protein resides in the nucleus. Its subcellular location is the cytoplasm. The protein localises to the cytoskeleton. It is found in the microtubule organizing center. It localises to the centrosome. The protein resides in the nucleolus. Its subcellular location is the nucleoplasm. The protein localises to the spindle. It is found in the spindle pole. It localises to the midbody. The protein resides in the cell projection. Its subcellular location is the axon. The protein localises to the growth cone. Plus-end-directed motor enzyme that is required for completion of cytokinesis. Required for proper midbody organization and abscission in polarized cortical stem cells. Plays a role in the regulation of neuronal polarization by mediating the transport of specific cargos. Participates in the mobilization of SHTN1 and in the accumulation of PIP3 in the growth cone of primary hippocampal neurons in a tubulin and actin-dependent manner. In the developing telencephalon, cooperates with SHTN1 to promote both the transition from the multipolar to the bipolar stage and the radial migration of cortical neurons from the ventricular zone toward the superficial layer of the neocortex. Involved in cerebral cortex growth. Acts as an oncogene for promoting bladder cancer cells proliferation, apoptosis inhibition and carcinogenic progression. This is Kinesin-like protein KIF20B from Homo sapiens (Human).